We begin with the raw amino-acid sequence, 351 residues long: Probable sugar phosphate/phosphate translocator At5g11230 (351 aa).

10 helical membrane passes run 15–35, 49–69, 89–109, 113–133, 141–161, 165–185, 205–225, 236–256, 263–283, and 286–306; these read IVLS…VIVY, FPIS…FLII, VVPI…AYIY, SFIQ…GVLF, DTMM…YGEA, VWGV…LVLI, VAPC…FPVL, AIFG…FLLV, TMNV…WSVI, and TVTP…AYYN. The EamA domain occupies 38 to 156; sequence YILDKKMYNW…LSISFGVAIA (119 aa). The disordered stretch occupies residues 321 to 351; it reads KKIQQADEESGRLLEEREGDVEGKKNDQSGN.

It belongs to the TPT transporter family. TPT (TC 2.A.7.9) subfamily.

The protein localises to the membrane. This Arabidopsis thaliana (Mouse-ear cress) protein is Probable sugar phosphate/phosphate translocator At5g11230.